Reading from the N-terminus, the 932-residue chain is Glycine dehydrogenase (decarboxylating) (932 aa).

Lysine 685 carries the N6-(pyridoxal phosphate)lysine modification.

It belongs to the GcvP family. The glycine cleavage system is composed of four proteins: P, T, L and H. Pyridoxal 5'-phosphate serves as cofactor.

The catalysed reaction is N(6)-[(R)-lipoyl]-L-lysyl-[glycine-cleavage complex H protein] + glycine + H(+) = N(6)-[(R)-S(8)-aminomethyldihydrolipoyl]-L-lysyl-[glycine-cleavage complex H protein] + CO2. In terms of biological role, the glycine cleavage system catalyzes the degradation of glycine. The P protein binds the alpha-amino group of glycine through its pyridoxal phosphate cofactor; CO(2) is released and the remaining methylamine moiety is then transferred to the lipoamide cofactor of the H protein. The chain is Glycine dehydrogenase (decarboxylating) from Brucella canis (strain ATCC 23365 / NCTC 10854 / RM-666).